Consider the following 883-residue polypeptide: Phosphoenolpyruvate carboxylase (883 aa).

Residues His138 and Lys546 contribute to the active site.

This sequence belongs to the PEPCase type 1 family. It depends on Mg(2+) as a cofactor.

It carries out the reaction oxaloacetate + phosphate = phosphoenolpyruvate + hydrogencarbonate. In terms of biological role, forms oxaloacetate, a four-carbon dicarboxylic acid source for the tricarboxylic acid cycle. The protein is Phosphoenolpyruvate carboxylase of Erwinia tasmaniensis (strain DSM 17950 / CFBP 7177 / CIP 109463 / NCPPB 4357 / Et1/99).